A 237-amino-acid polypeptide reads, in one-letter code: Exosome complex component Rrp4 (237 aa).

The S1 motif domain maps to 72-144 (GHIVVGKVVD…LSKDPVLTIK (73 aa)). One can recognise a KH domain in the interval 152 to 211 (PRGTLVEIPPQKVPRVIGRRGSMVSMIEDLLGVKLIVGQNGRIVVVGDDPQRVEIAVLAV).

Belongs to the RRP4 family. As to quaternary structure, component of the archaeal exosome complex. Forms a trimer of Rrp4 and/or Csl4 subunits. The trimer associates with a hexameric ring-like arrangement composed of 3 Rrp41-Rrp42 heterodimers.

The protein resides in the cytoplasm. Its function is as follows. Non-catalytic component of the exosome, which is a complex involved in RNA degradation. Increases the RNA binding and the efficiency of RNA degradation. Confers strong poly(A) specificity to the exosome. The sequence is that of Exosome complex component Rrp4 from Thermofilum pendens (strain DSM 2475 / Hrk 5).